The following is a 315-amino-acid chain: Malate dehydrogenase (315 aa).

Residues 10–15 (GAGNVG) and Asp34 contribute to the NAD(+) site. The substrate site is built by Arg85 and Arg91. Residues Asn98 and 121-123 (VSN) each bind NAD(+). 2 residues coordinate substrate: Asn123 and Arg154. Residue His178 is the Proton acceptor of the active site.

It belongs to the LDH/MDH superfamily. MDH type 3 family.

The catalysed reaction is (S)-malate + NAD(+) = oxaloacetate + NADH + H(+). In terms of biological role, catalyzes the reversible oxidation of malate to oxaloacetate. This chain is Malate dehydrogenase, found in Rhodopirellula baltica (strain DSM 10527 / NCIMB 13988 / SH1).